We begin with the raw amino-acid sequence, 1059 residues long: Carbamoyl phosphate synthase large chain (1059 aa).

A carboxyphosphate synthetic domain region spans residues 1 to 401 (MPKRKDIQKI…SLLKACRSLE (401 aa)). The ATP site is built by Arg129, Arg169, Gly175, Gly176, Arg208, Ile210, Glu215, Gly241, Ile242, His243, Gln284, and Glu298. Residues 133–327 (KQLMEELGQP…IAKLAAKIAV (195 aa)) form the ATP-grasp 1 domain. Mg(2+)-binding residues include Gln284, Glu298, and Asn300. Mn(2+) contacts are provided by Gln284, Glu298, and Asn300. The segment at 402–546 (VCVDHNELPA…YSTYGFENES (145 aa)) is oligomerization domain. The carbamoyl phosphate synthetic domain stretch occupies residues 547 to 929 (VKSSKESVLV…ALYKAFEASY (383 aa)). One can recognise an ATP-grasp 2 domain in the interval 671–861 (EQALKELDIP…MAQVATRLIL (191 aa)). Positions 707, 746, 748, 752, 777, 778, 779, 780, 820, and 832 each coordinate ATP. Gln820, Glu832, and Asn834 together coordinate Mg(2+). 3 residues coordinate Mn(2+): Gln820, Glu832, and Asn834. The MGS-like domain occupies 930–1059 (LHLPNFGNIV…ESRSFTTEAI (130 aa)). An allosteric domain region spans residues 930 to 1059 (LHLPNFGNIV…ESRSFTTEAI (130 aa)).

The protein belongs to the CarB family. Composed of two chains; the small (or glutamine) chain promotes the hydrolysis of glutamine to ammonia, which is used by the large (or ammonia) chain to synthesize carbamoyl phosphate. Tetramer of heterodimers (alpha,beta)4. Mg(2+) serves as cofactor. Requires Mn(2+) as cofactor.

The catalysed reaction is hydrogencarbonate + L-glutamine + 2 ATP + H2O = carbamoyl phosphate + L-glutamate + 2 ADP + phosphate + 2 H(+). The enzyme catalyses hydrogencarbonate + NH4(+) + 2 ATP = carbamoyl phosphate + 2 ADP + phosphate + 2 H(+). The protein operates within amino-acid biosynthesis; L-arginine biosynthesis; carbamoyl phosphate from bicarbonate: step 1/1. Its pathway is pyrimidine metabolism; UMP biosynthesis via de novo pathway; (S)-dihydroorotate from bicarbonate: step 1/3. In terms of biological role, large subunit of the glutamine-dependent carbamoyl phosphate synthetase (CPSase). CPSase catalyzes the formation of carbamoyl phosphate from the ammonia moiety of glutamine, carbonate, and phosphate donated by ATP, constituting the first step of 2 biosynthetic pathways, one leading to arginine and/or urea and the other to pyrimidine nucleotides. The large subunit (synthetase) binds the substrates ammonia (free or transferred from glutamine from the small subunit), hydrogencarbonate and ATP and carries out an ATP-coupled ligase reaction, activating hydrogencarbonate by forming carboxy phosphate which reacts with ammonia to form carbamoyl phosphate. The polypeptide is Carbamoyl phosphate synthase large chain (Streptococcus sanguinis (strain SK36)).